Here is a 438-residue protein sequence, read N- to C-terminus: 23S rRNA (uracil(1939)-C(5))-methyltransferase RlmD (438 aa).

Positions 9-68 constitute a TRAM domain; it reads RRTVNRHIITVTADNLDAQGQGVARHQGKTIFVAGLLPGEQAQVQLTEEKRQFAKAKLVK. [4Fe-4S] cluster-binding residues include C81, C87, C90, and C168. Residues Q272, F301, N306, E322, N349, and D370 each coordinate S-adenosyl-L-methionine. Residue C396 is the Nucleophile of the active site.

Belongs to the class I-like SAM-binding methyltransferase superfamily. RNA M5U methyltransferase family. RlmD subfamily.

It carries out the reaction uridine(1939) in 23S rRNA + S-adenosyl-L-methionine = 5-methyluridine(1939) in 23S rRNA + S-adenosyl-L-homocysteine + H(+). Catalyzes the formation of 5-methyl-uridine at position 1939 (m5U1939) in 23S rRNA. The chain is 23S rRNA (uracil(1939)-C(5))-methyltransferase RlmD from Photorhabdus laumondii subsp. laumondii (strain DSM 15139 / CIP 105565 / TT01) (Photorhabdus luminescens subsp. laumondii).